The sequence spans 348 residues: Galanin receptor type 1 (348 aa).

Over 1-34 (MELAMVNLSEGNGSDPEPPAPESRPLFGIGVENF) the chain is Extracellular. Asn7 and Asn12 each carry an N-linked (GlcNAc...) asparagine glycan. The helical transmembrane segment at 35 to 55 (ITLVVFGLIFAMGVLGNSLVI) threads the bilayer. Over 56-70 (TVLARSKPGKPRSTT) the chain is Cytoplasmic. A helical membrane pass occupies residues 71 to 91 (NLFILNLSIADLAYLLFCIPF). At 92–109 (QATVYALPTWVLGAFICK) the chain is on the extracellular side. Cys108 and Cys186 are oxidised to a cystine. A helical membrane pass occupies residues 110–131 (FIHYFFTVSMLVSIFTLAAMSV). Residues 132 to 151 (DRYVAIVHSRRSSSLRVSRN) lie on the Cytoplasmic side of the membrane. A helical transmembrane segment spans residues 152–172 (ALLGVGFIWALSIAMASPVAY). The Extracellular segment spans residues 173-197 (HQRLFHRDSNQTFCWEQWPNKLHKK). Asn182 carries an N-linked (GlcNAc...) asparagine glycan. A helical transmembrane segment spans residues 198–218 (AYVVCTFVFGYLLPLLLICFC). The Cytoplasmic portion of the chain corresponds to 219–247 (YAKVLNHLHKKLKNMSKKSEASKKKTAQT). The chain crosses the membrane as a helical span at residues 248–268 (VLVVVVVFGISWLPHHVVHLW). Residues 269-270 (AE) lie on the Extracellular side of the membrane. A helical transmembrane segment spans residues 271 to 291 (FGAFPLTPASFFFRITAHCLA). At 292–348 (YSNSSVNPIIYAFLSENFRKAYKQVFKCHVCDESPRSETKENKSRMDTPPSTNCTHV) the chain is on the cytoplasmic side. Cys319 is lipidated: S-palmitoyl cysteine. Residues 328-337 (SETKENKSRM) show a composition bias toward basic and acidic residues. The segment at 328 to 348 (SETKENKSRMDTPPSTNCTHV) is disordered.

Belongs to the G-protein coupled receptor 1 family. As to quaternary structure, interacts with GRP39 AND HTR1A. In terms of processing, three cysteine residues are found in the C-terminus, at least one of which may be palmitoylated. In terms of tissue distribution, expression is detected in brain, spinal cord, heart and skeletal muscle.

It is found in the cell membrane. Its function is as follows. Receptor for the hormone galanin. The activity of this receptor is mediated by G proteins that inhibit adenylate cyclase activity. The polypeptide is Galanin receptor type 1 (Galr1) (Mus musculus (Mouse)).